We begin with the raw amino-acid sequence, 609 residues long: Grainyhead-like protein 1 homolog (609 aa).

Positions 1-91 (MTQDYDNKRP…EHDHADHEHS (91 aa)) are transcription activation. The segment at 183 to 207 (SDHFTSNNQPPNSQRRTPDSTFSET) is disordered. Residues 185–206 (HFTSNNQPPNSQRRTPDSTFSE) show a composition bias toward polar residues. The Grh/CP2 DB domain occupies 239–465 (AGNNFEYTLE…DLDTQPVLFI (227 aa)). Interaction with DNA stretches follow at residues 371–380 (TDFSSQKGVK) and 418–421 (RKIR).

It belongs to the grh/CP2 family. Grainyhead subfamily. In terms of assembly, binds DNA as homodimer.

Its subcellular location is the nucleus. In terms of biological role, transcription factor involved in epithelial development. Binds directly to the consensus DNA sequence 5'-AACCGGTT-3' and modulates expression of epidermal-specific genes, including XK81A1. Important regulator of DSG1 in the context of epidermal differentiation. Regulates the maintenance of skin barrier. No genetic interaction with GRHL3, nor functional cooperativity due to diverse target gene selectivity during epithelia development. Functions downstream of BMP-signaling cascade modulating endogenous bmp4-responsive targets. The chain is Grainyhead-like protein 1 homolog from Xenopus laevis (African clawed frog).